We begin with the raw amino-acid sequence, 315 residues long: Ester hydrolase C11orf54 homolog (315 aa).

Zn(2+)-binding residues include histidine 266, histidine 268, and histidine 278.

Monomer. It depends on Zn(2+) as a cofactor.

The protein localises to the nucleus. It is found in the cytoplasm. Functionally, exhibits ester hydrolase activity on the substrate p-nitrophenyl acetate, in vitro. Regulates DNA damage and repair by regulating HIF1A degradation via chaperone-mediated autophagy (CMA). The sequence is that of Ester hydrolase C11orf54 homolog from Mus musculus (Mouse).